The chain runs to 398 residues: Tryptophan synthase beta chain (398 aa).

N6-(pyridoxal phosphate)lysine is present on lysine 87.

This sequence belongs to the TrpB family. Tetramer of two alpha and two beta chains. Pyridoxal 5'-phosphate serves as cofactor.

The catalysed reaction is (1S,2R)-1-C-(indol-3-yl)glycerol 3-phosphate + L-serine = D-glyceraldehyde 3-phosphate + L-tryptophan + H2O. The protein operates within amino-acid biosynthesis; L-tryptophan biosynthesis; L-tryptophan from chorismate: step 5/5. Its function is as follows. The beta subunit is responsible for the synthesis of L-tryptophan from indole and L-serine. This Blochmanniella floridana protein is Tryptophan synthase beta chain.